The primary structure comprises 410 residues: Multifunctional CCA protein (410 aa).

Residues Gly-8 and Arg-11 each coordinate ATP. 2 residues coordinate CTP: Gly-8 and Arg-11. Mg(2+) contacts are provided by Asp-21 and Asp-23. The ATP site is built by Arg-91, Arg-137, and Arg-140. 3 residues coordinate CTP: Arg-91, Arg-137, and Arg-140. Residues Thr-228–Tyr-329 form the HD domain.

It belongs to the tRNA nucleotidyltransferase/poly(A) polymerase family. Bacterial CCA-adding enzyme type 1 subfamily. In terms of assembly, monomer. Can also form homodimers and oligomers. Mg(2+) is required as a cofactor. Requires Ni(2+) as cofactor.

The enzyme catalyses a tRNA precursor + 2 CTP + ATP = a tRNA with a 3' CCA end + 3 diphosphate. It catalyses the reaction a tRNA with a 3' CCA end + 2 CTP + ATP = a tRNA with a 3' CCACCA end + 3 diphosphate. In terms of biological role, catalyzes the addition and repair of the essential 3'-terminal CCA sequence in tRNAs without using a nucleic acid template. Adds these three nucleotides in the order of C, C, and A to the tRNA nucleotide-73, using CTP and ATP as substrates and producing inorganic pyrophosphate. tRNA 3'-terminal CCA addition is required both for tRNA processing and repair. Also involved in tRNA surveillance by mediating tandem CCA addition to generate a CCACCA at the 3' terminus of unstable tRNAs. While stable tRNAs receive only 3'-terminal CCA, unstable tRNAs are marked with CCACCA and rapidly degraded. The chain is Multifunctional CCA protein from Pseudomonas aeruginosa (strain ATCC 15692 / DSM 22644 / CIP 104116 / JCM 14847 / LMG 12228 / 1C / PRS 101 / PAO1).